The sequence spans 477 residues: Adenylyl cyclase-associated protein 2 (477 aa).

Position 2 is an N-acetylalanine (alanine 2). 2 disordered regions span residues 224 to 262 (SILS…PSRS) and 274 to 324 (ITKG…HAPV). Over residues 231 to 248 (GLPPPPPPPPPPGPPPPF) the composition is skewed to pro residues. Positions 300 to 318 (RSPTKTRTPSPTSSKSNSP) are enriched in low complexity. 2 positions are modified to phosphoserine: serine 301 and serine 309. The C-CAP/cofactor C-like domain occupies 318-455 (PQKHAPVLEL…QGDDYREFPI (138 aa)).

The protein belongs to the CAP family. As to expression, found at relatively high levels in testes, at moderate levels in brain, heart and skeletal muscle, at lower levels in lung, skin, kidney and small intestine, and is undetectable in liver or spleen.

It is found in the cell membrane. Its function is as follows. Involved in the regulation of actin polymerization. The protein is Adenylyl cyclase-associated protein 2 (Cap2) of Rattus norvegicus (Rat).